Here is a 97-residue protein sequence, read N- to C-terminus: Co-chaperonin GroES (97 aa).

The protein belongs to the GroES chaperonin family. Heptamer of 7 subunits arranged in a ring. Interacts with the chaperonin GroEL.

It localises to the cytoplasm. In terms of biological role, together with the chaperonin GroEL, plays an essential role in assisting protein folding. The GroEL-GroES system forms a nano-cage that allows encapsulation of the non-native substrate proteins and provides a physical environment optimized to promote and accelerate protein folding. GroES binds to the apical surface of the GroEL ring, thereby capping the opening of the GroEL channel. The protein is Co-chaperonin GroES of Pseudomonas putida (strain GB-1).